We begin with the raw amino-acid sequence, 444 residues long: GTPase Der (444 aa).

EngA-type G domains are found at residues 3-167 (PIVA…PEAE) and 180-353 (LRLA…AECQ). GTP-binding positions include 9–16 (GRPNVGKS), 56–60 (DTGGM), 119–122 (NKVD), 186–193 (GRPNAGKS), 233–237 (DTAGV), and 298–301 (NKTD). The 85-residue stretch at 354 to 438 (IRIGTGELNR…PVKVVCRASH (85 aa)) folds into the KH-like domain.

This sequence belongs to the TRAFAC class TrmE-Era-EngA-EngB-Septin-like GTPase superfamily. EngA (Der) GTPase family. As to quaternary structure, associates with the 50S ribosomal subunit.

Functionally, GTPase that plays an essential role in the late steps of ribosome biogenesis. In Solidesulfovibrio magneticus (strain ATCC 700980 / DSM 13731 / RS-1) (Desulfovibrio magneticus), this protein is GTPase Der.